The chain runs to 118 residues: uncharacterized protein (118 aa).

A helical membrane pass occupies residues 41–61; it reads IFLLIIITIIFALTMYTSVQV.

It localises to the host membrane. This is an uncharacterized protein from Ostreid herpesvirus 1 (isolate France) (OsHV-1).